The following is a 423-amino-acid chain: Serine hydroxymethyltransferase (423 aa).

Residues Leu121 and 125 to 127 (GHL) contribute to the (6S)-5,6,7,8-tetrahydrofolate site. Lys230 is modified (N6-(pyridoxal phosphate)lysine). (6S)-5,6,7,8-tetrahydrofolate is bound at residue 355-357 (SPF).

This sequence belongs to the SHMT family. In terms of assembly, homodimer. Pyridoxal 5'-phosphate is required as a cofactor.

The protein localises to the cytoplasm. It carries out the reaction (6R)-5,10-methylene-5,6,7,8-tetrahydrofolate + glycine + H2O = (6S)-5,6,7,8-tetrahydrofolate + L-serine. It functions in the pathway one-carbon metabolism; tetrahydrofolate interconversion. The protein operates within amino-acid biosynthesis; glycine biosynthesis; glycine from L-serine: step 1/1. Functionally, catalyzes the reversible interconversion of serine and glycine with tetrahydrofolate (THF) serving as the one-carbon carrier. This reaction serves as the major source of one-carbon groups required for the biosynthesis of purines, thymidylate, methionine, and other important biomolecules. Also exhibits THF-independent aldolase activity toward beta-hydroxyamino acids, producing glycine and aldehydes, via a retro-aldol mechanism. The chain is Serine hydroxymethyltransferase from Hydrogenovibrio crunogenus (strain DSM 25203 / XCL-2) (Thiomicrospira crunogena).